Reading from the N-terminus, the 486-residue chain is Malonate-semialdehyde dehydrogenase (486 aa).

NAD(+) contacts are provided by Phe-154, Lys-178, Glu-181, Arg-182, and Ser-231. Residue Cys-286 is the Nucleophile of the active site. Glu-386 contacts NAD(+).

This sequence belongs to the aldehyde dehydrogenase family. IolA subfamily. Homotetramer.

It catalyses the reaction 3-oxopropanoate + NAD(+) + CoA + H2O = hydrogencarbonate + acetyl-CoA + NADH + H(+). The enzyme catalyses 2-methyl-3-oxopropanoate + NAD(+) + CoA + H2O = propanoyl-CoA + hydrogencarbonate + NADH + H(+). Its pathway is polyol metabolism; myo-inositol degradation into acetyl-CoA; acetyl-CoA from myo-inositol: step 7/7. Its function is as follows. Catalyzes the oxidation of malonate semialdehyde (MSA) and methylmalonate semialdehyde (MMSA) into acetyl-CoA and propanoyl-CoA, respectively. Is involved in a myo-inositol catabolic pathway. Bicarbonate, and not CO2, is the end-product of the enzymatic reaction. The protein is Malonate-semialdehyde dehydrogenase of Bacillus cereus (strain B4264).